Here is a 120-residue protein sequence, read N- to C-terminus: Large ribosomal subunit protein uL18 (120 aa).

It belongs to the universal ribosomal protein uL18 family. In terms of assembly, part of the 50S ribosomal subunit. Part of the 5S rRNA/L5/L18/L25 subcomplex. Contacts the 23S rRNA and 5S rRNA. Required for catalysis of RNase M5.

This is one of the proteins that bind and probably mediate the attachment of the 5S RNA into the large ribosomal subunit, where it forms part of the central protuberance. Its function is as follows. Required for correct processing of both the 5' and 3' ends of 5S rRNA precursor, which is does in conjunction with ribonuclease M5 (RNase M5, rnmV). Possibly folds the 5S rRNA precursor into the correct conformation, thus acting as a chaperone. This Bacillus subtilis (strain 168) protein is Large ribosomal subunit protein uL18.